Here is a 59-residue protein sequence, read N- to C-terminus: Large ribosomal subunit protein uL30 (59 aa).

Belongs to the universal ribosomal protein uL30 family. In terms of assembly, part of the 50S ribosomal subunit.

The sequence is that of Large ribosomal subunit protein uL30 from Listeria welshimeri serovar 6b (strain ATCC 35897 / DSM 20650 / CCUG 15529 / CIP 8149 / NCTC 11857 / SLCC 5334 / V8).